The chain runs to 475 residues: Methyltransferase-like protein 25B (475 aa).

Positions 185-210 (NKRLVARAQRLDQELLQALDKMEKRH) form a coiled coil. The helical transmembrane segment at 406-426 (VVAFFSLALLLAPLVETLILL) threads the bilayer.

This sequence belongs to the METTL25 family.

It localises to the membrane. The polypeptide is Methyltransferase-like protein 25B (Rattus norvegicus (Rat)).